A 236-amino-acid chain; its full sequence is uncharacterized protein (236 aa).

It to M.tuberculosis Rv2557.

This is an uncharacterized protein from Mycobacterium tuberculosis (strain CDC 1551 / Oshkosh).